The following is a 310-amino-acid chain: UDP-N-acetylenolpyruvoylglucosamine reductase (310 aa).

The FAD-binding PCMH-type domain maps to 34–213 (RAGGNAEVLF…LRRMNEITSS (180 aa)). Arg178 is an active-site residue. Ser227 acts as the Proton donor in catalysis. Glu297 is an active-site residue.

It belongs to the MurB family. It depends on FAD as a cofactor.

The protein localises to the cytoplasm. The catalysed reaction is UDP-N-acetyl-alpha-D-muramate + NADP(+) = UDP-N-acetyl-3-O-(1-carboxyvinyl)-alpha-D-glucosamine + NADPH + H(+). It participates in cell wall biogenesis; peptidoglycan biosynthesis. In terms of biological role, cell wall formation. This is UDP-N-acetylenolpyruvoylglucosamine reductase from Parvibaculum lavamentivorans (strain DS-1 / DSM 13023 / NCIMB 13966).